The sequence spans 443 residues: Palmitoyltransferase pfa5 (443 aa).

2 helical membrane-spanning segments follow: residues 17 to 37 (IIPPILIGVFGYASYAITKPL) and 57 to 77 (AGAAILAIYYVLLIPVLATYL). Residues 96–137 (CTQNQTGSDGSKHRHRRHRRRKSGHHLSKTTEKTDRSDGGDV) are disordered. Residues 107 to 123 (KHRHRRHRRRKSGHHLS) are compositionally biased toward basic residues. The segment covering 124 to 137 (KTTEKTDRSDGGDV) has biased composition (basic and acidic residues). In terms of domain architecture, DHHC spans 175–225 (VYCSTCCQFKTDRAHHCREVDRCVRKMDHFCPWVGGVVSETSFKFFIQFIV). Transmembrane regions (helical) follow at residues 220–240 (FIQFIVYTMIYCIFVLIVFAI) and 256–276 (WIVCLALSSLFGFFTFGVAIS). Residues 410-443 (AGLEVSTESESADPVGAAETPQHEQRRGKHRRRN) are disordered.

Belongs to the DHHC palmitoyltransferase family. PFA5 subfamily. Autopalmitoylated.

It localises to the membrane. The enzyme catalyses L-cysteinyl-[protein] + hexadecanoyl-CoA = S-hexadecanoyl-L-cysteinyl-[protein] + CoA. This is Palmitoyltransferase pfa5 (pfa5) from Aspergillus fumigatus (strain ATCC MYA-4609 / CBS 101355 / FGSC A1100 / Af293) (Neosartorya fumigata).